A 288-amino-acid polypeptide reads, in one-letter code: Bifunctional protein FolD (288 aa).

Residues Gly-166–Ser-168, Ser-191, and Ile-232 each bind NADP(+).

This sequence belongs to the tetrahydrofolate dehydrogenase/cyclohydrolase family. As to quaternary structure, homodimer.

It catalyses the reaction (6R)-5,10-methylene-5,6,7,8-tetrahydrofolate + NADP(+) = (6R)-5,10-methenyltetrahydrofolate + NADPH. The catalysed reaction is (6R)-5,10-methenyltetrahydrofolate + H2O = (6R)-10-formyltetrahydrofolate + H(+). It functions in the pathway one-carbon metabolism; tetrahydrofolate interconversion. Its function is as follows. Catalyzes the oxidation of 5,10-methylenetetrahydrofolate to 5,10-methenyltetrahydrofolate and then the hydrolysis of 5,10-methenyltetrahydrofolate to 10-formyltetrahydrofolate. This chain is Bifunctional protein FolD, found in Rickettsia peacockii (strain Rustic).